The following is a 367-amino-acid chain: Viral cathepsin (367 aa).

An N-terminal signal peptide occupies residues 1-25; that stretch reads MRKYHSNIMHKIITFVSLLWTFVVC. Residues 26 to 156 constitute a propeptide, activation peptide; it reads DEISLHTSSS…IVKGAPDIRL (131 aa). 2 N-linked (GlcNAc...) asparagine; by host glycosylation sites follow: Asn103 and Asn135. 3 cysteine pairs are disulfide-bonded: Cys177–Cys218, Cys211–Cys251, and Cys306–Cys354. Residue Cys180 is part of the active site. Active-site residues include His313 and Asn333.

The protein belongs to the peptidase C1 family. In terms of processing, synthesized as an inactive proenzyme and activated by proteolytic removal of the inhibitory propeptide.

The enzyme catalyses Endopeptidase of broad specificity, hydrolyzing substrates of both cathepsin L and cathepsin B.. Functionally, cysteine protease that plays an essential role in host liquefaction to facilitate horizontal transmission of the virus. May participate in the degradation of foreign protein expressed by the baculovirus system. The chain is Viral cathepsin (VCATH) from Lepidoptera (butterflies and moths).